The sequence spans 172 residues: Small ribosomal subunit protein uS5 (172 aa).

In terms of domain architecture, S5 DRBM spans 16-79 (LKEKLVHINR…EDGKKNVVKV (64 aa)).

It belongs to the universal ribosomal protein uS5 family. As to quaternary structure, part of the 30S ribosomal subunit. Contacts proteins S4 and S8.

In terms of biological role, with S4 and S12 plays an important role in translational accuracy. Located at the back of the 30S subunit body where it stabilizes the conformation of the head with respect to the body. The polypeptide is Small ribosomal subunit protein uS5 (Prosthecochloris aestuarii (strain DSM 271 / SK 413)).